A 367-amino-acid polypeptide reads, in one-letter code: 3-isopropylmalate dehydrogenase (367 aa).

NAD(+) is bound at residue 77-90 (GPKWDAVPYEVRPE). Substrate contacts are provided by Arg-97, Arg-107, Arg-135, and Asp-226. Asp-226, Asp-250, and Asp-254 together coordinate Mg(2+). 290 to 302 (GSAPDIAGKGIAN) contacts NAD(+).

It belongs to the isocitrate and isopropylmalate dehydrogenases family. LeuB type 1 subfamily. In terms of assembly, homodimer. It depends on Mg(2+) as a cofactor. Mn(2+) is required as a cofactor.

It localises to the cytoplasm. It carries out the reaction (2R,3S)-3-isopropylmalate + NAD(+) = 4-methyl-2-oxopentanoate + CO2 + NADH. Its pathway is amino-acid biosynthesis; L-leucine biosynthesis; L-leucine from 3-methyl-2-oxobutanoate: step 3/4. Functionally, catalyzes the oxidation of 3-carboxy-2-hydroxy-4-methylpentanoate (3-isopropylmalate) to 3-carboxy-4-methyl-2-oxopentanoate. The product decarboxylates to 4-methyl-2 oxopentanoate. This chain is 3-isopropylmalate dehydrogenase, found in Mesorhizobium japonicum (strain LMG 29417 / CECT 9101 / MAFF 303099) (Mesorhizobium loti (strain MAFF 303099)).